A 49-amino-acid chain; its full sequence is MRTLVTLACSECKRRNYTTTKNKRTTPEKLSFKKYCRFCHAHTEHKETK.

It belongs to the bacterial ribosomal protein bL33 family.

This chain is Large ribosomal subunit protein bL33, found in Syntrophobacter fumaroxidans (strain DSM 10017 / MPOB).